Reading from the N-terminus, the 92-residue chain is Small ribosomal subunit protein uS19c (92 aa).

Belongs to the universal ribosomal protein uS19 family.

It is found in the plastid. The protein localises to the chloroplast. Protein S19 forms a complex with S13 that binds strongly to the 16S ribosomal RNA. In Picea abies (Norway spruce), this protein is Small ribosomal subunit protein uS19c (rps19).